The chain runs to 562 residues: Delta-1-pyrroline-5-carboxylate dehydrogenase, mitochondrial (562 aa).

A mitochondrion-targeting transit peptide spans 1-23 (MLPLPSLRRSLLSHAWRGAGLRW). The residue at position 30 (Lys30) is an N6-succinyllysine. A Phosphoserine modification is found at Ser43. An N6-acetyllysine modification is found at Lys51. N6-acetyllysine; alternate occurs at positions 92, 98, 113, 129, and 174. 5 positions are modified to N6-succinyllysine; alternate: Lys92, Lys98, Lys113, Lys129, and Lys174. NAD(+) is bound by residues Ser207, Lys232, and 285–289 (GSVPT). Residue Glu313 is the Proton acceptor of the active site. Lys317 carries the post-translational modification N6-acetyllysine. Residue Lys346 is modified to N6-succinyllysine. Cys347 acts as the Nucleophile in catalysis. Lys357 carries the post-translational modification N6-acetyllysine; alternate. The residue at position 357 (Lys357) is an N6-succinyllysine; alternate. 2 positions are modified to N6-acetyllysine: Lys364 and Lys375. Position 394 is an N6-succinyllysine (Lys394). Glu446 is an NAD(+) binding site. N6-acetyllysine is present on Lys461. N6-acetyllysine; alternate is present on Lys508. Lys508 bears the N6-succinyllysine; alternate mark. Ser512 contributes to the substrate binding site. 2 positions are modified to N6-acetyllysine: Lys530 and Lys551.

It belongs to the aldehyde dehydrogenase family. Homodimer. Acetylation of Lys-98, Lys-113 and Lys-401 is observed in liver mitochondria from fasted mice but not from fed mice.

The protein localises to the mitochondrion matrix. It catalyses the reaction L-glutamate 5-semialdehyde + NAD(+) + H2O = L-glutamate + NADH + 2 H(+). It functions in the pathway amino-acid degradation; L-proline degradation into L-glutamate; L-glutamate from L-proline: step 2/2. In terms of biological role, irreversible conversion of delta-1-pyrroline-5-carboxylate (P5C), derived either from proline or ornithine, to glutamate. This is a necessary step in the pathway interconnecting the urea and tricarboxylic acid cycles. The preferred substrate is glutamic gamma-semialdehyde, other substrates include succinic, glutaric and adipic semialdehydes. The sequence is that of Delta-1-pyrroline-5-carboxylate dehydrogenase, mitochondrial (Aldh4a1) from Mus musculus (Mouse).